Reading from the N-terminus, the 374-residue chain is Beta-lytic metalloendopeptidase (374 aa).

The N-terminal stretch at 1–24 (MKKISKAGLGLALVCALATIGGNA) is a signal peptide. Residues 25–195 (ARRATAQRRG…RQGRPGRAAV (171 aa)) constitute a propeptide that is removed on maturation. A disordered region spans residues 128-187 (PTRQGAGDAGPRQSAAGAVRAFRRQRAGGRAARRRRVPAGLRPPVQRTAPGQGGFGPLRQ). The span at 148-164 (AFRRQRAGGRAARRRRV) shows a compositional bias: basic residues. An intrachain disulfide couples Cys-261 to Cys-307. 2 residues coordinate Zn(2+): His-316 and His-318. A disulfide bond links Cys-351 and Cys-364.

The protein belongs to the peptidase M23A family. Zn(2+) serves as cofactor.

It is found in the secreted. The catalysed reaction is Cleavage of N-acetylmuramoyl-|-Ala, and of the insulin B chain at 23-Gly-|-Phe-24 &gt; 18-Val-|-Cys(SO3H).. This chain is Beta-lytic metalloendopeptidase, found in Achromobacter lyticus.